The chain runs to 660 residues: Bifunctional polymyxin resistance protein ArnA (660 aa).

The segment at 1–304 (MKAVVFAYHD…TLGLVEGSRL (304 aa)) is formyltransferase ArnAFT. The active-site Proton donor; for formyltransferase activity is the His-104. (6R)-10-formyltetrahydrofolate contacts are provided by residues Arg-114 and 136-140 (VAKAD). The interval 314 to 660 (RRTRVLILGV…RTVDIVEKSS (347 aa)) is dehydrogenase ArnADH. Residues Asp-347 and 368-369 (DI) contribute to the NAD(+) site. Residues Ala-393, Tyr-398, and 432–433 (TS) each bind UDP-alpha-D-glucuronate. Glu-434 serves as the catalytic Proton acceptor; for decarboxylase activity. Residues Arg-460, Asn-492, 526 to 535 (KLIDGGKQKR), and Tyr-613 each bind UDP-alpha-D-glucuronate. The active-site Proton donor; for decarboxylase activity is Arg-619.

The protein in the N-terminal section; belongs to the Fmt family. UDP-L-Ara4N formyltransferase subfamily. In the C-terminal section; belongs to the NAD(P)-dependent epimerase/dehydratase family. UDP-glucuronic acid decarboxylase subfamily. In terms of assembly, homohexamer, formed by a dimer of trimers.

It carries out the reaction UDP-alpha-D-glucuronate + NAD(+) = UDP-beta-L-threo-pentopyranos-4-ulose + CO2 + NADH. The enzyme catalyses UDP-4-amino-4-deoxy-beta-L-arabinose + (6R)-10-formyltetrahydrofolate = UDP-4-deoxy-4-formamido-beta-L-arabinose + (6S)-5,6,7,8-tetrahydrofolate + H(+). The protein operates within nucleotide-sugar biosynthesis; UDP-4-deoxy-4-formamido-beta-L-arabinose biosynthesis; UDP-4-deoxy-4-formamido-beta-L-arabinose from UDP-alpha-D-glucuronate: step 1/3. It functions in the pathway nucleotide-sugar biosynthesis; UDP-4-deoxy-4-formamido-beta-L-arabinose biosynthesis; UDP-4-deoxy-4-formamido-beta-L-arabinose from UDP-alpha-D-glucuronate: step 3/3. It participates in bacterial outer membrane biogenesis; lipopolysaccharide biosynthesis. Bifunctional enzyme that catalyzes the oxidative decarboxylation of UDP-glucuronic acid (UDP-GlcUA) to UDP-4-keto-arabinose (UDP-Ara4O) and the addition of a formyl group to UDP-4-amino-4-deoxy-L-arabinose (UDP-L-Ara4N) to form UDP-L-4-formamido-arabinose (UDP-L-Ara4FN). The modified arabinose is attached to lipid A and is required for resistance to polymyxin and cationic antimicrobial peptides. In Escherichia fergusonii (strain ATCC 35469 / DSM 13698 / CCUG 18766 / IAM 14443 / JCM 21226 / LMG 7866 / NBRC 102419 / NCTC 12128 / CDC 0568-73), this protein is Bifunctional polymyxin resistance protein ArnA.